A 166-amino-acid chain; its full sequence is 2-C-methyl-D-erythritol 2,4-cyclodiphosphate synthase (166 aa).

A divalent metal cation is bound by residues aspartate 11 and histidine 13. 4-CDP-2-C-methyl-D-erythritol 2-phosphate contacts are provided by residues 11 to 13 (DVH) and 40 to 41 (HS). An a divalent metal cation-binding site is contributed by histidine 48. 4-CDP-2-C-methyl-D-erythritol 2-phosphate contacts are provided by residues 62–64 (DLG), 135–138 (TTSD), phenylalanine 142, and arginine 145.

It belongs to the IspF family. Homotrimer. The cofactor is a divalent metal cation.

It catalyses the reaction 4-CDP-2-C-methyl-D-erythritol 2-phosphate = 2-C-methyl-D-erythritol 2,4-cyclic diphosphate + CMP. The protein operates within isoprenoid biosynthesis; isopentenyl diphosphate biosynthesis via DXP pathway; isopentenyl diphosphate from 1-deoxy-D-xylulose 5-phosphate: step 4/6. In terms of biological role, involved in the biosynthesis of isopentenyl diphosphate (IPP) and dimethylallyl diphosphate (DMAPP), two major building blocks of isoprenoid compounds. Catalyzes the conversion of 4-diphosphocytidyl-2-C-methyl-D-erythritol 2-phosphate (CDP-ME2P) to 2-C-methyl-D-erythritol 2,4-cyclodiphosphate (ME-CPP) with a corresponding release of cytidine 5-monophosphate (CMP). In Pseudarthrobacter chlorophenolicus (strain ATCC 700700 / DSM 12829 / CIP 107037 / JCM 12360 / KCTC 9906 / NCIMB 13794 / A6) (Arthrobacter chlorophenolicus), this protein is 2-C-methyl-D-erythritol 2,4-cyclodiphosphate synthase.